The chain runs to 556 residues: Probable glucomannan 4-beta-mannosyltransferase 3 (556 aa).

Residues 56–76 (IFVFIPILKCLVTICLVMSLL) traverse the membrane as a helical segment. Asp159 is an active-site residue. Positions 218 and 220 each coordinate substrate. The active site involves Asp312. 4 helical membrane passes run 391–411 (IVVH…TVLF), 428–448 (ITIL…FWIL), 509–529 (LVVG…GGSY), and 530–550 (FYVY…GYIG).

Belongs to the glycosyltransferase 2 family. Plant cellulose synthase-like A subfamily.

The protein localises to the golgi apparatus membrane. The enzyme catalyses GDP-mannose + (glucomannan)n = GDP + (glucomannan)n+1.. Its function is as follows. Probable mannan synthase which consists of a 4-beta-mannosyltransferase activity on mannan using GDP-mannose. The beta-1,4-mannan product is the backbone for galactomannan synthesis by galactomannan galactosyltransferase. Galactomannan is a noncellulosic polysaccharides of plant cell wall. This Arabidopsis thaliana (Mouse-ear cress) protein is Probable glucomannan 4-beta-mannosyltransferase 3.